A 106-amino-acid polypeptide reads, in one-letter code: Small ribosomal subunit protein uS10 (106 aa).

The protein belongs to the universal ribosomal protein uS10 family. Part of the 30S ribosomal subunit.

Its function is as follows. Involved in the binding of tRNA to the ribosomes. The chain is Small ribosomal subunit protein uS10 from Pyrobaculum islandicum (strain DSM 4184 / JCM 9189 / GEO3).